Consider the following 161-residue polypeptide: DNA-directed RNA polymerase 18 kDa subunit (161 aa).

Belongs to the poxviridae DNA-directed RNA polymerase 18 kDa subunit family. As to quaternary structure, the DNA-dependent RNA polymerase used for intermediate and late genes expression consists of eight subunits 147 kDa, 133 kDa, 35 kDa, 30 kDa, 22 kDa, 19 kDa, 18 kDa and 7 kDa totalling more than 500 kDa in mass. The same holoenzyme, with the addition of the transcription-specificity factor RAP94, is used for early gene expression.

It is found in the virion. It catalyses the reaction RNA(n) + a ribonucleoside 5'-triphosphate = RNA(n+1) + diphosphate. Functionally, part of the DNA-dependent RNA polymerase which catalyzes the transcription of viral DNA into RNA using the four ribonucleoside triphosphates as substrates. Responsible for the transcription of early, intermediate and late genes. DNA-dependent RNA polymerase associates with the early transcription factor (ETF) thereby allowing the early genes transcription. Late transcription, and probably also intermediate transcription, require newly synthesized RNA polymerase. The polypeptide is DNA-directed RNA polymerase 18 kDa subunit (RPO18) (Vertebrata (FPV)).